A 416-amino-acid chain; its full sequence is Gamma-glutamyl phosphate reductase (416 aa).

Belongs to the gamma-glutamyl phosphate reductase family.

It localises to the cytoplasm. It carries out the reaction L-glutamate 5-semialdehyde + phosphate + NADP(+) = L-glutamyl 5-phosphate + NADPH + H(+). Its pathway is amino-acid biosynthesis; L-proline biosynthesis; L-glutamate 5-semialdehyde from L-glutamate: step 2/2. Its function is as follows. Catalyzes the NADPH-dependent reduction of L-glutamate 5-phosphate into L-glutamate 5-semialdehyde and phosphate. The product spontaneously undergoes cyclization to form 1-pyrroline-5-carboxylate. In Vibrio vulnificus (strain CMCP6), this protein is Gamma-glutamyl phosphate reductase.